The following is a 370-amino-acid chain: Sodium-dependent organic anion transporter (370 aa).

The disordered stretch occupies residues 1–24; it reads MSADCEGNSTCPANSTEEDPPVGM. Residues 1–32 are Extracellular-facing; sequence MSADCEGNSTCPANSTEEDPPVGMEGQGSLKL. Residues asparagine 8 and asparagine 14 are each glycosylated (N-linked (GlcNAc...) asparagine). A helical membrane pass occupies residues 33–53; that stretch reads VFTVLSAVMVGLVMFSFGCSV. Residues 54-67 lie on the Cytoplasmic side of the membrane; sequence ESRKLWLHLRRPWG. A helical transmembrane segment spans residues 68-88; sequence IAVGLLCQFGLMPLTAYLLAI. Topologically, residues 89-97 are extracellular; that stretch reads GFGLKPFQA. A helical transmembrane segment spans residues 98-118; sequence IAVLIMGSCPGGTVSNVLTFW. At 119-126 the chain is on the cytoplasmic side; that stretch reads VDGDMDLS. The chain crosses the membrane as a helical span at residues 127 to 147; that stretch reads ISMTTCSTVAALGMMPLCLYV. The Extracellular portion of the chain corresponds to 148 to 159; the sequence is YTRSWTLPQSLT. Residues 160 to 180 traverse the membrane as a helical segment; it reads IPYQSIGITLVSLVVPVASGI. At 181–195 the chain is on the cytoplasmic side; that stretch reads YVNYRWPKQATFILK. Residues 196-216 traverse the membrane as a helical segment; sequence VGAAVGGMLLLVVAVTGVVLA. Topologically, residues 217 to 224 are extracellular; sequence KGWNIDVT. The helical transmembrane segment at 225–245 threads the bilayer; that stretch reads LLVISCIFPLVGHVMGFLLAF. Over 246–265 the chain is Cytoplasmic; the sequence is LTHQSWQRCRTISIETGAQN. The helical transmembrane segment at 266 to 283 threads the bilayer; sequence IQLCIAMMQLSFSAEYLV. A topological domain (extracellular) is located at residue glutamine 284. A helical transmembrane segment spans residues 285 to 305; sequence LLNFALAYGLFQVLHGLLIVA. The Cytoplasmic segment spans residues 306 to 370; it reads AYQAYKRRQK…ELTSHVPSCE (65 aa).

Belongs to the bile acid:sodium symporter (BASS) (TC 2.A.28) family. In terms of processing, glycosylated. In terms of tissue distribution, highly expressed in heart, lung, spleen and adrenal gland. Moderately expressed in skeletal muscle, testis and small intestine.

The protein resides in the membrane. The enzyme catalyses estrone 3-sulfate(out) + 2 Na(+)(out) = estrone 3-sulfate(in) + 2 Na(+)(in). It catalyses the reaction 17beta-estradiol 3-sulfate(out) + 2 Na(+)(out) = 17beta-estradiol 3-sulfate(in) + 2 Na(+)(in). It carries out the reaction dehydroepiandrosterone 3-sulfate(out) + 2 Na(+)(out) = dehydroepiandrosterone 3-sulfate(in) + 2 Na(+)(in). The catalysed reaction is androst-5-ene-diol 3-sulfate(out) + 2 Na(+)(out) = androst-5-ene-diol 3-sulfate(in) + 2 Na(+)(in). The enzyme catalyses pregnenolone sulfate(out) + 2 Na(+)(out) = pregnenolone sulfate(in) + 2 Na(+)(in). It catalyses the reaction taurolithocholate 3-sulfate(out) + 2 Na(+)(out) = taurolithocholate 3-sulfate(in) + 2 Na(+)(in). It carries out the reaction androsterone 3alpha-sulfate(out) + 2 Na(+)(out) = androsterone 3alpha-sulfate(in) + 2 Na(+)(in). The catalysed reaction is 5alpha-dihydrotestosterone sulfate(out) + 2 Na(+)(out) = 5alpha-dihydrotestosterone sulfate(in) + 2 Na(+)(in). The enzyme catalyses 17beta-estradiol 17-sulfate(out) + 2 Na(+)(out) = 17beta-estradiol 17-sulfate(in) + 2 Na(+)(in). It catalyses the reaction 17alpha-hydroxypregnenolone 3-sulfate(out) + 2 Na(+)(out) = 17alpha-hydroxypregnenolone 3-sulfate(in) + 2 Na(+)(in). It carries out the reaction epiandrosterone 3-sulfate(out) + 2 Na(+)(out) = epiandrosterone 3-sulfate(in) + 2 Na(+)(in). The catalysed reaction is epitestosterone 17-sulfate(out) + 2 Na(+)(out) = epitestosterone 17-sulfate(in) + 2 Na(+)(in). The enzyme catalyses testosterone 17-sulfate(out) + 2 Na(+)(out) = testosterone 17-sulfate(in) + 2 Na(+)(in). It catalyses the reaction 16alpha-hydroxydehydroepiandrosterone 3-sulfate(out) + 2 Na(+)(out) = 16alpha-hydroxydehydroepiandrosterone 3-sulfate(in) + 2 Na(+)(in). In terms of biological role, transports sulfoconjugated steroid hormones from the extracellular compartment into the cytosol in a sodium-dependent manner without hydrolysis. Steroid sulfate hormones are commonly considered to be biologically inactive metabolites, that may be activated by steroid sulfatases into free steroids. May play an important role by delivering sulfoconjugated steroids to specific target cells in reproductive organs. May play a role transporting the estriol precursor 16alpha-hydroxydehydroepiandrosterone 3-sulfate (16a-OH-DHEAS) at the fetal blood vessel endothelium. Can also transport other sulfoconjugated molecules such as taurolithocholic acid-3-sulfate and sulfoconjugated pyrenes. The chain is Sodium-dependent organic anion transporter (Slc10a6) from Rattus norvegicus (Rat).